Reading from the N-terminus, the 335-residue chain is Methionine import ATP-binding protein MetN 2 (335 aa).

The region spanning 2 to 242 (IEFHDVHKTY…PQHPTTRRFV (241 aa)) is the ABC transporter domain. 38 to 45 (GHSGAGKS) contributes to the ATP binding site.

Belongs to the ABC transporter superfamily. Methionine importer (TC 3.A.1.24) family. In terms of assembly, the complex is composed of two ATP-binding proteins (MetN), two transmembrane proteins (MetI) and a solute-binding protein (MetQ).

Its subcellular location is the cell inner membrane. The catalysed reaction is L-methionine(out) + ATP + H2O = L-methionine(in) + ADP + phosphate + H(+). It catalyses the reaction D-methionine(out) + ATP + H2O = D-methionine(in) + ADP + phosphate + H(+). In terms of biological role, part of the ABC transporter complex MetNIQ involved in methionine import. Responsible for energy coupling to the transport system. The polypeptide is Methionine import ATP-binding protein MetN 2 (Pseudomonas aeruginosa (strain UCBPP-PA14)).